Consider the following 1060-residue polypeptide: Beta-galactosidase (1060 aa).

Substrate is bound by residues asparagine 110 and aspartate 209. Aspartate 209 is a Na(+) binding site. Mg(2+) contacts are provided by glutamate 432, histidine 434, and glutamate 477. Substrate is bound by residues glutamate 477 and 553 to 556 (EYAH). The Proton donor role is filled by glutamate 477. Catalysis depends on glutamate 553, which acts as the Nucleophile. Asparagine 613 serves as a coordination point for Mg(2+). Residues phenylalanine 617 and asparagine 620 each contribute to the Na(+) site. Asparagine 620 and tryptophan 1035 together coordinate substrate.

It belongs to the glycosyl hydrolase 2 family. Homotetramer. Mg(2+) serves as cofactor. Requires Na(+) as cofactor.

The enzyme catalyses Hydrolysis of terminal non-reducing beta-D-galactose residues in beta-D-galactosides.. The sequence is that of Beta-galactosidase from Yersinia pestis bv. Antiqua (strain Antiqua).